Reading from the N-terminus, the 149-residue chain is MNKGQRLIKIRDIVTNREIETQDELVDELRRSGYPVTQATVSRDIKELHLVKVPLNDGRYKYSLPADQRFNPYGKMKRILSDSFVSVDSAQNLVVMKVLPGNADAIGVLIDHLSWDELIGTVCGDDTILMIARDEEKAKQIIDRLLGML.

The protein belongs to the ArgR family.

The protein localises to the cytoplasm. It participates in amino-acid biosynthesis; L-arginine biosynthesis [regulation]. In terms of biological role, regulates arginine biosynthesis genes. The polypeptide is Arginine repressor (Exiguobacterium sp. (strain ATCC BAA-1283 / AT1b)).